Reading from the N-terminus, the 161-residue chain is Protein lin-52 (161 aa).

The disordered stretch occupies residues T137–Q161.

Belongs to the lin-52 family. In terms of assembly, component of the DRM complex, at least composed of lin-9, lin-35, lin-37, lin-52, lin-53, lin-54- dpl-1 and efl-1. Interacts with zft-11; the interaction is required to suppress the activation of non-neuronal genes in neurons.

It localises to the nucleus. Synthetic multivulva class B (synMuvB) protein. SynMuvB proteins are required to repress the induction of vulval development by Ras signaling and probably act by forming the multiprotein DRM complex that represses transcription. In association with the zinc finger protein ztf-11, negatively regulates the expression of non-neuronal genes during neurogenesis. This chain is Protein lin-52, found in Caenorhabditis elegans.